Reading from the N-terminus, the 216-residue chain is tRNA (guanine-N(7)-)-methyltransferase (216 aa).

Residues E44, E69, N97, and D119 each coordinate S-adenosyl-L-methionine. The active site involves D119. Residues K123, D155, and 192 to 195 (TEYE) contribute to the substrate site.

This sequence belongs to the class I-like SAM-binding methyltransferase superfamily. TrmB family.

It carries out the reaction guanosine(46) in tRNA + S-adenosyl-L-methionine = N(7)-methylguanosine(46) in tRNA + S-adenosyl-L-homocysteine. The protein operates within tRNA modification; N(7)-methylguanine-tRNA biosynthesis. Functionally, catalyzes the formation of N(7)-methylguanine at position 46 (m7G46) in tRNA. This Lysinibacillus sphaericus (strain C3-41) protein is tRNA (guanine-N(7)-)-methyltransferase.